Here is a 596-residue protein sequence, read N- to C-terminus: Dihydroxy-acid dehydratase pbrD, mitochondrial (596 aa).

Residues 1 to 18 (MATSSIRSRALGLSRRAR) constitute a mitochondrion transit peptide. C84 is a [2Fe-2S] cluster binding site. D116 provides a ligand contact to Mg(2+). Residue C157 coordinates [2Fe-2S] cluster. D158 is a binding site for Mg(2+). Residue C230 participates in [2Fe-2S] cluster binding. E483 provides a ligand contact to Mg(2+). The Proton acceptor role is filled by S509.

Belongs to the IlvD/Edd family. Requires [2Fe-2S] cluster as cofactor. Mg(2+) is required as a cofactor.

The protein localises to the mitochondrion. The enzyme catalyses (2R)-2,3-dihydroxy-3-methylbutanoate = 3-methyl-2-oxobutanoate + H2O. It carries out the reaction (2R,3R)-2,3-dihydroxy-3-methylpentanoate = (S)-3-methyl-2-oxopentanoate + H2O. The protein operates within amino-acid biosynthesis; L-isoleucine biosynthesis; L-isoleucine from 2-oxobutanoate: step 3/4. It participates in amino-acid biosynthesis; L-valine biosynthesis; L-valine from pyruvate: step 3/4. DHAD activity is not inhibited by the dihydroxyacid dehydratase inhibitor aspterric acid (AA). In terms of biological role, dihydroxyacid dehydratase; part of the gene cluster that mediates the biosynthesis of the sesquiterpenoid aspterric acid (AA), an inhibitor of dihydroxy-acid dehydratase (DHAD) effective as an herbicide. Performs the third step in the common pathway leading to biosynthesis of branched-chain amino acids. Catalyzes the dehydration of (2R,3R)-2,3-dihydroxy-3-methylpentanoate (2,3-dihydroxy-3-methylvalerate) into 2-oxo-3-methylpentanoate (2-oxo-3-methylvalerate) and of (2R)-2,3-dihydroxy-3-methylbutanoate (2,3-dihydroxyisovalerate) into 2-oxo-3-methylbutanoate (2-oxoisovalerate), the penultimate precursor to L-isoleucine and L-valine, respectively. PbrD confers self-resistance in the presence of the dihydroxyacid dehydratase inhibitor aspterric acid (AA) produced by the ast cluster. This Penicillium brasilianum protein is Dihydroxy-acid dehydratase pbrD, mitochondrial.